The chain runs to 63 residues: uncharacterized protein (63 aa).

A helical membrane pass occupies residues 4–24; the sequence is LNQFILIFLLLIVILFIFFLI.

The protein localises to the membrane. This is an uncharacterized protein from Invertebrate iridescent virus 6 (IIV-6).